The following is a 246-amino-acid chain: Transcription factor A, mitochondrial (246 aa).

Residues 1 to 42 (MALLRGVWGVLNALGKSGADLCAGCGSRLRYPFSFAYVPKWF) constitute a mitochondrion transit peptide. The HMG box 1 DNA-binding region spans 50-118 (PKKPMTSYVR…VYKEEINRIQ (69 aa)). S56 and S61 each carry phosphoserine; by PKA. T122 bears the Phosphothreonine mark. A DNA-binding region (HMG box 2) is located at residues 155–219 (PKRPRSAYNI…RYYNEMKSWE (65 aa)). S160 is modified (phosphoserine; by PKA). Residues S193 and S195 each carry the phosphoserine modification.

As to quaternary structure, monomer; binds DNA as a monomer. Homodimer. Component of the mitochondrial transcription initiation complex, composed at least of TFB2M, TFAM and POLRMT. In this complex TFAM recruits POLRMT to the promoter whereas TFB2M induces structural changes in POLRMT to enable promoter opening and trapping of the DNA non-template strand. Upon metabolic stress, forms a complex composed of FOXO3, SIRT3, TFAM and POLRMT. Interacts with TFB1M and TFB2M. Interacts with CLPX; this enhances DNA-binding. Phosphorylation by PKA within the HMG box 1 impairs DNA binding and promotes degradation by the AAA+ Lon protease.

The protein localises to the mitochondrion. It localises to the mitochondrion matrix. Its subcellular location is the mitochondrion nucleoid. In terms of biological role, binds to the mitochondrial light strand promoter and functions in mitochondrial transcription regulation. Component of the mitochondrial transcription initiation complex, composed at least of TFB2M, TFAM and POLRMT that is required for basal transcription of mitochondrial DNA. In this complex, TFAM recruits POLRMT to a specific promoter whereas TFB2M induces structural changes in POLRMT to enable promoter opening and trapping of the DNA non-template strand. Required for accurate and efficient promoter recognition by the mitochondrial RNA polymerase. Promotes transcription initiation from the HSP1 and the light strand promoter by binding immediately upstream of transcriptional start sites. Is able to unwind DNA. Bends the mitochondrial light strand promoter DNA into a U-turn shape via its HMG boxes. Required for maintenance of normal levels of mitochondrial DNA. May play a role in organizing and compacting mitochondrial DNA. The chain is Transcription factor A, mitochondrial from Bos taurus (Bovine).